Here is a 350-residue protein sequence, read N- to C-terminus: MQFIEIVEKLKKGQSGVVDFKIKNNPVILTAASLENAKDNDISFLDNNSPLNLRNLIETSKASALLLPANDTYIIEIAKKISVDWIILKEPKIAFAETLEFLYPSNVESEGIHKSAVIGQNVKIGLGVSIGANAYIGDNTEIGAGTIIHAGVVLYRNVRIGSKNLIHANSVIHSGSKLGDKCVINANAVIGGEGFGFVPTSNGWKKMPQVGIVILKNKVEVGSGSTIDRPSVGETIIGEDTKIDNLVQIGHGVTTGKGCAMAAQVGIAGGAQIGDGVILAGQVGISNRVKIGDGVIASSKTGIVSNIEAGTVVSGFPAIPNKLWLRCSANFKKLPEIAKAIRQLDRKKSR.

Catalysis depends on histidine 251, which acts as the Proton acceptor.

The protein belongs to the transferase hexapeptide repeat family. LpxD subfamily. As to quaternary structure, homotrimer.

The catalysed reaction is a UDP-3-O-[(3R)-3-hydroxyacyl]-alpha-D-glucosamine + a (3R)-hydroxyacyl-[ACP] = a UDP-2-N,3-O-bis[(3R)-3-hydroxyacyl]-alpha-D-glucosamine + holo-[ACP] + H(+). It participates in bacterial outer membrane biogenesis; LPS lipid A biosynthesis. Its function is as follows. Catalyzes the N-acylation of UDP-3-O-acylglucosamine using 3-hydroxyacyl-ACP as the acyl donor. Is involved in the biosynthesis of lipid A, a phosphorylated glycolipid that anchors the lipopolysaccharide to the outer membrane of the cell. This Prochlorococcus marinus (strain NATL2A) protein is UDP-3-O-acylglucosamine N-acyltransferase.